A 69-amino-acid polypeptide reads, in one-letter code: DNA-directed RNA polymerase subunit omega (69 aa).

This sequence belongs to the RNA polymerase subunit omega family. In terms of assembly, the RNAP catalytic core consists of 2 alpha, 1 beta, 1 beta' and 1 omega subunit. When a sigma factor is associated with the core the holoenzyme is formed, which can initiate transcription.

The catalysed reaction is RNA(n) + a ribonucleoside 5'-triphosphate = RNA(n+1) + diphosphate. Functionally, promotes RNA polymerase assembly. Latches the N- and C-terminal regions of the beta' subunit thereby facilitating its interaction with the beta and alpha subunits. The protein is DNA-directed RNA polymerase subunit omega of Geotalea daltonii (strain DSM 22248 / JCM 15807 / FRC-32) (Geobacter daltonii).